We begin with the raw amino-acid sequence, 543 residues long: Chaperonin GroEL 4 (543 aa).

ATP is bound by residues 29 to 32, 86 to 90, Gly-411, 476 to 478, and Asp-492; these read TLGP, DGTTT, and DAA.

This sequence belongs to the chaperonin (HSP60) family. In terms of assembly, forms a cylinder of 14 subunits composed of two heptameric rings stacked back-to-back. Interacts with the co-chaperonin GroES.

The protein resides in the cytoplasm. The enzyme catalyses ATP + H2O + a folded polypeptide = ADP + phosphate + an unfolded polypeptide.. Its function is as follows. Together with its co-chaperonin GroES, plays an essential role in assisting protein folding. The GroEL-GroES system forms a nano-cage that allows encapsulation of the non-native substrate proteins and provides a physical environment optimized to promote and accelerate protein folding. The sequence is that of Chaperonin GroEL 4 from Bradyrhizobium diazoefficiens (strain JCM 10833 / BCRC 13528 / IAM 13628 / NBRC 14792 / USDA 110).